Consider the following 785-residue polypeptide: Cadherin-7 (785 aa).

Residues 1–27 (MKLGKVEFCHFLQLIALFLCFSGMSQA) form the signal peptide. Positions 28–47 (ELSRSRSKPYFQSGRSRTKR) are excised as a propeptide. The Extracellular portion of the chain corresponds to 28–607 (ELSRSRSKPY…AYVLPAGLST (580 aa)). Cadherin domains follow at residues 49–153 (WVWN…EPKF), 154–262 (LDGP…PPRF), 263–377 (PRRS…PPVF), 378–482 (SSPL…APEF), and 482–599 (FAMD…AEAY). Asn449 and Asn530 each carry an N-linked (GlcNAc...) asparagine glycan. A helical transmembrane segment spans residues 608–628 (GALIAILACVLTLLVLILLIV). Over 629-785 (TMRRRKKEPL…YGTGQESLYS (157 aa)) the chain is Cytoplasmic.

It is found in the cell membrane. Cadherins are calcium-dependent cell adhesion proteins. They preferentially interact with themselves in a homophilic manner in connecting cells; cadherins may thus contribute to the sorting of heterogeneous cell types. The protein is Cadherin-7 (CDH7) of Homo sapiens (Human).